The following is a 478-amino-acid chain: Protein MAINTENANCE OF MERISTEMS (478 aa).

A disordered region spans residues Ala-459–Glu-478. Residues Lys-464–Arg-468 carry the Nuclear localization signal motif.

In terms of tissue distribution, expressed in root meristem, root vasculature, shoot apical meristem (SAM), leaf vasculature and ovules.

It localises to the nucleus. Required for the organization of the root apical meristem (RAM) and the shoot apical meristem (SAM). Required to maintain genome stability and cell division activity in meristematic cells. This Arabidopsis thaliana (Mouse-ear cress) protein is Protein MAINTENANCE OF MERISTEMS.